A 361-amino-acid polypeptide reads, in one-letter code: Trans-2,3-enoyl-CoA reductase-like (361 aa).

Phosphoserine occurs at positions 33 and 35. 4 helical membrane passes run Val-139–Phe-159, Val-181–Phe-201, Leu-215–His-235, and Ile-309–Ile-329.

The protein belongs to the steroid 5-alpha reductase family. Expression is highest in the heart with very low to almost undetectable levels in brain, skeletal muscle, stomach, pancreas, liver, kidney, small intestine, and uterus.

The protein resides in the membrane. Its subcellular location is the endoplasmic reticulum. The chain is Trans-2,3-enoyl-CoA reductase-like (Tecrl) from Mus musculus (Mouse).